A 223-amino-acid chain; its full sequence is Ribonuclease 3 (223 aa).

One can recognise an RNase III domain in the interval 4 to 127; it reads YSQLEKRLNY…IIGAVYLEAG (124 aa). E40 serves as a coordination point for Mg(2+). D44 is a catalytic residue. N113 and E116 together coordinate Mg(2+). The active site involves E116. Residues 154 to 223 form the DRBM domain; it reads DYKTALQELT…AKIALEALKK (70 aa).

The protein belongs to the ribonuclease III family. As to quaternary structure, homodimer. Requires Mg(2+) as cofactor.

Its subcellular location is the cytoplasm. It carries out the reaction Endonucleolytic cleavage to 5'-phosphomonoester.. Its function is as follows. Digests double-stranded RNA. Involved in the processing of primary rRNA transcript to yield the immediate precursors to the large and small rRNAs (23S and 16S). Processes some mRNAs, and tRNAs when they are encoded in the rRNA operon. Processes pre-crRNA and tracrRNA of type II CRISPR loci if present in the organism. This is Ribonuclease 3 from Sulfurovum sp. (strain NBC37-1).